Consider the following 428-residue polypeptide: 3-phosphoshikimate 1-carboxyvinyltransferase (428 aa).

Residues Lys-19, Ser-20, and Arg-24 each contribute to the 3-phosphoshikimate site. Lys-19 is a binding site for phosphoenolpyruvate. The phosphoenolpyruvate site is built by Gly-91 and Arg-119. 4 residues coordinate 3-phosphoshikimate: Ser-164, Gln-166, Asp-312, and Lys-339. Gln-166 provides a ligand contact to phosphoenolpyruvate. Asp-312 functions as the Proton acceptor in the catalytic mechanism. The phosphoenolpyruvate site is built by Arg-343 and Arg-386.

This sequence belongs to the EPSP synthase family. As to quaternary structure, monomer.

The protein localises to the cytoplasm. The enzyme catalyses 3-phosphoshikimate + phosphoenolpyruvate = 5-O-(1-carboxyvinyl)-3-phosphoshikimate + phosphate. It participates in metabolic intermediate biosynthesis; chorismate biosynthesis; chorismate from D-erythrose 4-phosphate and phosphoenolpyruvate: step 6/7. In terms of biological role, catalyzes the transfer of the enolpyruvyl moiety of phosphoenolpyruvate (PEP) to the 5-hydroxyl of shikimate-3-phosphate (S3P) to produce enolpyruvyl shikimate-3-phosphate and inorganic phosphate. This is 3-phosphoshikimate 1-carboxyvinyltransferase from Bacillus licheniformis (strain ATCC 14580 / DSM 13 / JCM 2505 / CCUG 7422 / NBRC 12200 / NCIMB 9375 / NCTC 10341 / NRRL NRS-1264 / Gibson 46).